The following is a 139-amino-acid chain: 10 kDa chaperonin 2, chloroplastic (139 aa).

The N-terminal 39 residues, 1 to 39 (MASTFVCSLPNPFFAFPVKATTPSTANHTLLGSRRGCLR), are a transit peptide targeting the chloroplast. The segment at 51–138 (KVVPQADRVL…CKESDLLALV (88 aa)) is cpn-10 domain.

Belongs to the GroES chaperonin family. In terms of tissue distribution, expressed in leaves and stems. Expressed at low levels in germinating seeds, seedlings, rosettes leaves, flowers and siliques.

The protein resides in the plastid. It is found in the chloroplast stroma. Its function is as follows. Functions as a co-chaperone for protein folding in chloroplasts. The polypeptide is 10 kDa chaperonin 2, chloroplastic (Arabidopsis thaliana (Mouse-ear cress)).